The chain runs to 396 residues: Proteasome-activating nucleotidase (396 aa).

A coiled-coil region spans residues 16-57; sequence ITYLKRRIRQLELQVRMLEADKERLERELSRLRSEMSRLRQP. ATP is bound by residues 181 to 186 and H320; that span reads GCGKTL. Residues 394–396 form a docks into pockets in the proteasome alpha-ring to cause gate opening region; sequence IYG.

The protein belongs to the AAA ATPase family. In terms of assembly, homohexamer. The hexameric complex has a two-ring architecture resembling a top hat that caps the 20S proteasome core at one or both ends. Upon ATP-binding, the C-terminus of PAN interacts with the alpha-rings of the proteasome core by binding to the intersubunit pockets.

It is found in the cytoplasm. ATPase which is responsible for recognizing, binding, unfolding and translocation of substrate proteins into the archaeal 20S proteasome core particle. Is essential for opening the gate of the 20S proteasome via an interaction with its C-terminus, thereby allowing substrate entry and access to the site of proteolysis. Thus, the C-termini of the proteasomal ATPase function like a 'key in a lock' to induce gate opening and therefore regulate proteolysis. Unfolding activity requires energy from ATP hydrolysis, whereas ATP binding alone promotes ATPase-20S proteasome association which triggers gate opening, and supports translocation of unfolded substrates. In Pyrococcus abyssi (strain GE5 / Orsay), this protein is Proteasome-activating nucleotidase.